We begin with the raw amino-acid sequence, 298 residues long: MATTSRSSLKRYYDVNGWLFVAPAIALISVFMLYPILRSLVLSLYTGRGMMLKFSGTGNLVRLWNDPVFWQALQNTVIFFVVQVPIMITMALILAAMLNNPKLRYSGLFRTMIFLPCVSSLVAYSILFKSMFSLDGVVNNTLLAIGIIGEPIGWLTDPFWAKVLIIIAITWRWTGYNMIFYLAALQNIDRSIYEAAKIDGVPSWGRFAFLTIPMLKPVILFTTITSTIGTLQLFDEVYNFTEGTGGPANSTLTLSLYIYNLTFRFMPSFSYAATVSYVIVLMVAVLSFLQFYAARERK.

The next 6 membrane-spanning stretches (helical) occupy residues G17 to L37, V77 to M97, M112 to F132, P151 to W171, A208 to I228, and F269 to L289. One can recognise an ABC transmembrane type-1 domain in the interval L73 to Q290.

This sequence belongs to the binding-protein-dependent transport system permease family. MalFG subfamily.

Its subcellular location is the cell inner membrane. Functionally, part of the binding-protein-dependent transport system for lactose. Probably responsible for the translocation of the substrate across the membrane. In Rhizobium radiobacter (Agrobacterium tumefaciens), this protein is Lactose transport system permease protein LacF (lacF).